Reading from the N-terminus, the 456-residue chain is uncharacterized protein (456 aa).

A TRAM domain is found at 3 to 61 (TIKKNEVKTGKVIDLTHEGHGVVKVDRYPIFIPNALIDEEIKFKLIKVKKNFAIGKLIE). C74, C80, C83, and C162 together coordinate [4Fe-4S] cluster. S-adenosyl-L-methionine contacts are provided by Q286, Y315, E336, and D384. C411 serves as the catalytic Nucleophile.

The protein belongs to the class I-like SAM-binding methyltransferase superfamily. RNA M5U methyltransferase family.

This is an uncharacterized protein from Staphylococcus epidermidis (strain ATCC 12228 / FDA PCI 1200).